Here is a 339-residue protein sequence, read N- to C-terminus: Lymphocyte-specific protein 1 (339 aa).

Residues 1–198 (MAEASSDPGA…SPPLSPTTKL (198 aa)) are disordered. The residue at position 24 (Ser-24) is a Phosphoserine. 2 stretches are compositionally biased toward basic and acidic residues: residues 32 to 43 (VHEQCQHERDRQ) and 51 to 61 (GGGHVPERPKQ). Ser-111 is subject to Phosphoserine. Positions 117 to 140 (EDRPGLHAYEKEDSDEVHLEELSL) are enriched in basic and acidic residues. At Thr-175 the chain carries Phosphothreonine. Residues Ser-177, Ser-188, Ser-189, and Ser-193 each carry the phosphoserine modification. Over residues 185–196 (IEQSSPPLSPTT) the composition is skewed to polar residues. Position 252 is a phosphoserine; by MAPKAPK2 (Ser-252). A disordered region spans residues 294 to 315 (KSLWEQKGGSKTSSTIKSTPSG). Residues 300–315 (KGGSKTSSTIKSTPSG) are compositionally biased toward low complexity. N6-acetyllysine is present on Lys-327.

In terms of assembly, binds actin. In terms of processing, phosphorylated by casein kinase II, protein kinase C and MAPKAPK2. Phosphorylation by PKC induces translocation from membrane to cytoplasm. Phosphorylation by MAPKAPK2 may regulate neutrophil chemotaxis. As to expression, activated T-lymphocytes.

Its subcellular location is the cell membrane. Functionally, may play a role in mediating neutrophil activation and chemotaxis. This chain is Lymphocyte-specific protein 1 (LSP1), found in Homo sapiens (Human).